Consider the following 114-residue polypeptide: Iron-sulfur cluster insertion protein ErpA (114 aa).

Positions 42, 106, and 108 each coordinate iron-sulfur cluster.

The protein belongs to the HesB/IscA family. In terms of assembly, homodimer. Requires iron-sulfur cluster as cofactor.

Its function is as follows. Required for insertion of 4Fe-4S clusters for at least IspG. In Salmonella typhi, this protein is Iron-sulfur cluster insertion protein ErpA.